The following is a 244-amino-acid chain: Probable transcriptional regulatory protein XfasM23_0940 (244 aa).

Belongs to the TACO1 family.

It is found in the cytoplasm. The sequence is that of Probable transcriptional regulatory protein XfasM23_0940 from Xylella fastidiosa (strain M23).